A 239-amino-acid chain; its full sequence is Ribosomal RNA small subunit methyltransferase G (239 aa).

S-adenosyl-L-methionine-binding positions include G78, F83, 129 to 130 (AE), and R148.

Belongs to the methyltransferase superfamily. RNA methyltransferase RsmG family.

It localises to the cytoplasm. Specifically methylates the N7 position of a guanine in 16S rRNA. The sequence is that of Ribosomal RNA small subunit methyltransferase G from Clostridium botulinum (strain Okra / Type B1).